The following is a 671-amino-acid chain: DNA ligase (671 aa).

NAD(+)-binding positions include 32–36 (DAEYD), 81–82 (SL), and Glu113. The active-site N6-AMP-lysine intermediate is the Lys115. 4 residues coordinate NAD(+): Arg136, Glu173, Lys290, and Lys314. Zn(2+)-binding residues include Cys408, Cys411, Cys426, and Cys432. The BRCT domain occupies 593–671 (EIDSPFAGKT…EAEMLRLLGS (79 aa)).

This sequence belongs to the NAD-dependent DNA ligase family. LigA subfamily. The cofactor is Mg(2+). It depends on Mn(2+) as a cofactor.

The enzyme catalyses NAD(+) + (deoxyribonucleotide)n-3'-hydroxyl + 5'-phospho-(deoxyribonucleotide)m = (deoxyribonucleotide)n+m + AMP + beta-nicotinamide D-nucleotide.. Its function is as follows. DNA ligase that catalyzes the formation of phosphodiester linkages between 5'-phosphoryl and 3'-hydroxyl groups in double-stranded DNA using NAD as a coenzyme and as the energy source for the reaction. It is essential for DNA replication and repair of damaged DNA. The sequence is that of DNA ligase from Shigella dysenteriae serotype 1 (strain Sd197).